Reading from the N-terminus, the 299-residue chain is AUGMIN subunit 1 (299 aa).

At Ser2 the chain carries N-acetylserine. 2 coiled-coil regions span residues 76–96 (RLKASEYRAQAARIREILESA) and 164–184 (RKAIQRLTYLKKILAQLEDDV).

The protein belongs to the HAUS1 family. As to quaternary structure, part of the augmin complex composed of 8 subunits. The complex acts on microtubules and interacts with gamma-tubulin in spindles and the phragmoplast. Interacts with AUG3.

It is found in the cytoplasm. The protein resides in the cytoskeleton. It localises to the spindle. The protein localises to the phragmoplast. Functionally, involved in microtubules reorganization during spindle and phragmoplast development. This is AUGMIN subunit 1 from Arabidopsis thaliana (Mouse-ear cress).